We begin with the raw amino-acid sequence, 295 residues long: Bifunctional protein FolD (295 aa).

Residues 165 to 167, S190, and I231 contribute to the NADP(+) site; that span reads GRS.

Belongs to the tetrahydrofolate dehydrogenase/cyclohydrolase family. In terms of assembly, homodimer.

The enzyme catalyses (6R)-5,10-methylene-5,6,7,8-tetrahydrofolate + NADP(+) = (6R)-5,10-methenyltetrahydrofolate + NADPH. It carries out the reaction (6R)-5,10-methenyltetrahydrofolate + H2O = (6R)-10-formyltetrahydrofolate + H(+). The protein operates within one-carbon metabolism; tetrahydrofolate interconversion. Catalyzes the oxidation of 5,10-methylenetetrahydrofolate to 5,10-methenyltetrahydrofolate and then the hydrolysis of 5,10-methenyltetrahydrofolate to 10-formyltetrahydrofolate. This chain is Bifunctional protein FolD, found in Nitrosomonas europaea (strain ATCC 19718 / CIP 103999 / KCTC 2705 / NBRC 14298).